The sequence spans 424 residues: Serine--tRNA ligase (424 aa).

230 to 232 lines the L-serine pocket; sequence TAE. Residue 261–263 coordinates ATP; that stretch reads RSE. Glu284 contacts L-serine. 348–351 is an ATP binding site; that stretch reads EISS. Residue Ser384 coordinates L-serine.

This sequence belongs to the class-II aminoacyl-tRNA synthetase family. Type-1 seryl-tRNA synthetase subfamily. Homodimer. The tRNA molecule binds across the dimer.

The protein resides in the cytoplasm. It catalyses the reaction tRNA(Ser) + L-serine + ATP = L-seryl-tRNA(Ser) + AMP + diphosphate + H(+). The catalysed reaction is tRNA(Sec) + L-serine + ATP = L-seryl-tRNA(Sec) + AMP + diphosphate + H(+). It functions in the pathway aminoacyl-tRNA biosynthesis; selenocysteinyl-tRNA(Sec) biosynthesis; L-seryl-tRNA(Sec) from L-serine and tRNA(Sec): step 1/1. Functionally, catalyzes the attachment of serine to tRNA(Ser). Is also able to aminoacylate tRNA(Sec) with serine, to form the misacylated tRNA L-seryl-tRNA(Sec), which will be further converted into selenocysteinyl-tRNA(Sec). This chain is Serine--tRNA ligase, found in Streptococcus pneumoniae serotype 2 (strain D39 / NCTC 7466).